Here is a 239-residue protein sequence, read N- to C-terminus: Ion-translocating oxidoreductase complex subunit E (239 aa).

5 helical membrane passes run L41–V61, L71–A91, E95–G115, S130–L150, and G184–L204.

It belongs to the NqrDE/RnfAE family. In terms of assembly, the complex is composed of six subunits: RnfA, RnfB, RnfC, RnfD, RnfE and RnfG.

The protein resides in the cell inner membrane. Its function is as follows. Part of a membrane-bound complex that couples electron transfer with translocation of ions across the membrane. In Pseudomonas paraeruginosa (strain DSM 24068 / PA7) (Pseudomonas aeruginosa (strain PA7)), this protein is Ion-translocating oxidoreductase complex subunit E.